The primary structure comprises 207 residues: Ribosomal RNA small subunit methyltransferase G (207 aa).

Residues Gly76, Gln81, 127-128 (VE), and Arg141 contribute to the S-adenosyl-L-methionine site.

This sequence belongs to the methyltransferase superfamily. RNA methyltransferase RsmG family.

It localises to the cytoplasm. The enzyme catalyses guanosine(527) in 16S rRNA + S-adenosyl-L-methionine = N(7)-methylguanosine(527) in 16S rRNA + S-adenosyl-L-homocysteine. Its function is as follows. Specifically methylates the N7 position of guanine in position 527 of 16S rRNA. In Neisseria gonorrhoeae (strain ATCC 700825 / FA 1090), this protein is Ribosomal RNA small subunit methyltransferase G.